A 441-amino-acid chain; its full sequence is Cortexillin-2 (441 aa).

The tract at residues 1 to 229 (MDLNKEWEKV…VLYTSLFFHA (229 aa)) is actin-binding. Calponin-homology (CH) domains are found at residues 9-117 (KVQE…RKYR) and 126-231 (KSSE…HAFR). Coiled coils occupy residues 229 to 362 (AFRA…RLGL) and 406 to 430 (SFEE…KYLN).

This sequence belongs to the cortexillin family. As to quaternary structure, homodimer; parallel.

Its subcellular location is the cytoplasm. It localises to the cytoskeleton. Actin-bundling protein. When linked to F-actin the actin filaments form preferentially anti-parallel bundles that associate into meshworks. Plays a major role in cytokinesis. Negatively regulates cortical localization of rapgap1. The polypeptide is Cortexillin-2 (ctxB) (Dictyostelium discoideum (Social amoeba)).